The primary structure comprises 302 residues: Protein TILLER ANGLE CONTROL 1 (302 aa).

Positions 57–63 (GILTIGT) match the IGT motif motif. Disordered stretches follow at residues 82-115 (ESEE…VEDE) and 159-180 (EGSS…KNKK). A compositionally biased stretch (acidic residues) spans 99–115 (DDDDDDDEHYDHSVEDE). Residues 162-175 (SEISTKPDQSANDQ) show a composition bias toward polar residues.

Belongs to the TAC family. Highly expressed in flower buds. Expressed in branch attachment sites, vegetative buds and young fruits.

Functionally, involved in the regulation of axillary shoot growth angle. Promotes horizontal shoot growth. The chain is Protein TILLER ANGLE CONTROL 1 from Prunus persica (Peach).